A 141-amino-acid chain; its full sequence is Small ribosomal subunit protein bS6 (141 aa).

Residues 96 to 141 (VTGQSEMLKAEENRSERRERRERPEHADSAEGDDSNDSDSSDNADE) are disordered. The segment covering 103-124 (LKAEENRSERRERRERPEHADS) has biased composition (basic and acidic residues). Residues 125-141 (AEGDDSNDSDSSDNADE) show a composition bias toward acidic residues.

This sequence belongs to the bacterial ribosomal protein bS6 family.

In terms of biological role, binds together with bS18 to 16S ribosomal RNA. The protein is Small ribosomal subunit protein bS6 of Pseudomonas putida (strain ATCC 700007 / DSM 6899 / JCM 31910 / BCRC 17059 / LMG 24140 / F1).